A 118-amino-acid polypeptide reads, in one-letter code: Fluoride-specific ion channel FluC 2 (118 aa).

The next 4 helical transmembrane spans lie at Met-1 to Ile-21, Phe-33 to Gly-53, Gly-55 to Phe-75, and Thr-93 to Met-113. 2 residues coordinate Na(+): Gly-70 and Thr-73.

The protein belongs to the fluoride channel Fluc/FEX (TC 1.A.43) family.

The protein resides in the cell membrane. The catalysed reaction is fluoride(in) = fluoride(out). With respect to regulation, na(+) is not transported, but it plays an essential structural role and its presence is essential for fluoride channel function. Fluoride-specific ion channel. Important for reducing fluoride concentration in the cell, thus reducing its toxicity. The protein is Fluoride-specific ion channel FluC 2 of Bacillus thuringiensis subsp. konkukian (strain 97-27).